A 216-amino-acid polypeptide reads, in one-letter code: MEYSHVVYALLAVALAIIFVLKGGKPSLKPTKYQALLEGYLRFVRNMLLENVGERGLKYVPLIAAIGLFVFFGNILGMVPGFEAPTANINTNLALALLVFFYYHFEGFRENGLAYLKHFMGPIPLMAPFFFVVEVISHIARPITLSLRLFANMKAGALLLLTLVSLVIKNPFTLVVSPVVLIFVIAIKFLAIFIQTYIFMILSVVYIAGAVAHEEH.

Helical transmembrane passes span 1–21 (MEYS…IFVL), 62–82 (LIAA…VPGF), 88–108 (NINT…FEGF), 119–139 (FMGP…ISHI), 149–169 (LFAN…LVIK), 174–194 (LVVS…AIFI), and 196–216 (TYIF…HEEH).

It belongs to the ATPase A chain family. As to quaternary structure, F-type ATPases have 2 components, CF(1) - the catalytic core - and CF(0) - the membrane proton channel. CF(1) has five subunits: alpha(3), beta(3), gamma(1), delta(1), epsilon(1). CF(0) has three main subunits: a(1), b(2) and c(9-12). The alpha and beta chains form an alternating ring which encloses part of the gamma chain. CF(1) is attached to CF(0) by a central stalk formed by the gamma and epsilon chains, while a peripheral stalk is formed by the delta and b chains.

The protein localises to the cell inner membrane. In terms of biological role, key component of the proton channel; it plays a direct role in the translocation of protons across the membrane. The protein is ATP synthase subunit a of Aquifex aeolicus (strain VF5).